The sequence spans 663 residues: UvrABC system protein B (663 aa).

Positions 31–271 (DNIEGGEKAQ…EASIAKIQAE (241 aa)) constitute a Helicase ATP-binding domain. 44–51 (GATGTGKT) provides a ligand contact to ATP. The Beta-hairpin motif lies at 97–120 (YYDYYQPEAYVPSSDTYIEKDSSV). The 167-residue stretch at 435–601 (QMDDLLGEIN…TIKKEIRDLI (167 aa)) folds into the Helicase C-terminal domain. One can recognise a UVR domain in the interval 627-662 (QEAIKKLQKQMHEAAELLDFELAAQIRDMVLELKSM).

This sequence belongs to the UvrB family. In terms of assembly, forms a heterotetramer with UvrA during the search for lesions. Interacts with UvrC in an incision complex.

It localises to the cytoplasm. In terms of biological role, the UvrABC repair system catalyzes the recognition and processing of DNA lesions. A damage recognition complex composed of 2 UvrA and 2 UvrB subunits scans DNA for abnormalities. Upon binding of the UvrA(2)B(2) complex to a putative damaged site, the DNA wraps around one UvrB monomer. DNA wrap is dependent on ATP binding by UvrB and probably causes local melting of the DNA helix, facilitating insertion of UvrB beta-hairpin between the DNA strands. Then UvrB probes one DNA strand for the presence of a lesion. If a lesion is found the UvrA subunits dissociate and the UvrB-DNA preincision complex is formed. This complex is subsequently bound by UvrC and the second UvrB is released. If no lesion is found, the DNA wraps around the other UvrB subunit that will check the other stand for damage. The sequence is that of UvrABC system protein B from Streptococcus uberis (strain ATCC BAA-854 / 0140J).